Here is a 442-residue protein sequence, read N- to C-terminus: UDP-N-acetylmuramate--L-alanine ligase (442 aa).

Residue 109–115 (GAHGKTS) participates in ATP binding.

This sequence belongs to the MurCDEF family.

Its subcellular location is the cytoplasm. The catalysed reaction is UDP-N-acetyl-alpha-D-muramate + L-alanine + ATP = UDP-N-acetyl-alpha-D-muramoyl-L-alanine + ADP + phosphate + H(+). Its pathway is cell wall biogenesis; peptidoglycan biosynthesis. Functionally, cell wall formation. The chain is UDP-N-acetylmuramate--L-alanine ligase from Streptococcus pyogenes serotype M2 (strain MGAS10270).